We begin with the raw amino-acid sequence, 78 residues long: UPF0335 protein RP113 (78 aa).

The protein belongs to the UPF0335 family.

The protein is UPF0335 protein RP113 of Rickettsia prowazekii (strain Madrid E).